Here is a 23-residue protein sequence, read N- to C-terminus: Mu-conotoxin-like SxIIIB (23 aa).

At Q1 the chain carries Pyrrolidone carboxylic acid. Intrachain disulfides connect C3-C16, C4-C21, and C11-C22. An Alanine amide modification is found at A23.

It belongs to the conotoxin M superfamily. In terms of tissue distribution, expressed by the venom duct.

It is found in the secreted. Mu-conotoxins block voltage-gated sodium channels (Nav). The protein is Mu-conotoxin-like SxIIIB of Conus striolatus (Cone snail).